Reading from the N-terminus, the 174-residue chain is Large ribosomal subunit protein uL18 (174 aa).

The protein belongs to the universal ribosomal protein uL18 family. As to quaternary structure, part of the 50S ribosomal subunit. Contacts the 5S and 23S rRNAs.

Its function is as follows. This is one of the proteins that bind and probably mediate the attachment of the 5S RNA into the large ribosomal subunit, where it forms part of the central protuberance. The polypeptide is Large ribosomal subunit protein uL18 (Methanosarcina barkeri (strain Fusaro / DSM 804)).